Reading from the N-terminus, the 220-residue chain is Ribosomal RNA small subunit methyltransferase Nep1 (220 aa).

Residues Gly178, Gly183, and 196–201 contribute to the S-adenosyl-L-methionine site; that span reads LYREPL.

Belongs to the class IV-like SAM-binding methyltransferase superfamily. RNA methyltransferase NEP1 family. As to quaternary structure, homodimer.

The enzyme catalyses a pseudouridine in rRNA + S-adenosyl-L-methionine = an N(1)-methylpseudouridine in rRNA + S-adenosyl-L-homocysteine + H(+). Methyltransferase involved in ribosomal biogenesis. Specifically catalyzes the N1-methylation of the pseudouridine corresponding to position 914 in M.jannaschii 16S rRNA. The sequence is that of Ribosomal RNA small subunit methyltransferase Nep1 from Thermococcus kodakarensis (strain ATCC BAA-918 / JCM 12380 / KOD1) (Pyrococcus kodakaraensis (strain KOD1)).